The sequence spans 379 residues: Cytochrome b (379 aa).

4 consecutive transmembrane segments (helical) span residues 33–53, 77–98, 113–133, and 178–198; these read FGSLLGLCLIIQIASGLFLDM, WLIRYIHANGASLFFVCLYLHI, WNIGIILLFLTMATAFMGYVL, and FFAFHFILPFIIAAMAMVHLL. Heme b is bound by residues H83 and H97. Residues H182 and H196 each contribute to the heme b site. H201 is a binding site for a ubiquinone. The next 4 helical transmembrane spans lie at 226 to 246, 288 to 308, 320 to 340, and 347 to 367; these read TKDFLGIVLLLTFFFTMVPFF, LGGVIALILSILILALLPHIQ, ISQFLFWLLVSDVLVLTWIGG, and FIIIGQIASLSYFTIILVLMP.

The protein belongs to the cytochrome b family. The cytochrome bc1 complex contains 11 subunits: 3 respiratory subunits (MT-CYB, CYC1 and UQCRFS1), 2 core proteins (UQCRC1 and UQCRC2) and 6 low-molecular weight proteins (UQCRH/QCR6, UQCRB/QCR7, UQCRQ/QCR8, UQCR10/QCR9, UQCR11/QCR10 and a cleavage product of UQCRFS1). This cytochrome bc1 complex then forms a dimer. Requires heme b as cofactor.

It localises to the mitochondrion inner membrane. Component of the ubiquinol-cytochrome c reductase complex (complex III or cytochrome b-c1 complex) that is part of the mitochondrial respiratory chain. The b-c1 complex mediates electron transfer from ubiquinol to cytochrome c. Contributes to the generation of a proton gradient across the mitochondrial membrane that is then used for ATP synthesis. This Dipodomys nelsoni (Nelson's kangaroo rat) protein is Cytochrome b (MT-CYB).